Reading from the N-terminus, the 512-residue chain is Maturase K (512 aa).

It belongs to the intron maturase 2 family. MatK subfamily.

It localises to the plastid. It is found in the chloroplast. Functionally, usually encoded in the trnK tRNA gene intron. Probably assists in splicing its own and other chloroplast group II introns. The polypeptide is Maturase K (Lemna minor (Common duckweed)).